A 333-amino-acid chain; its full sequence is Dihydroorotate dehydrogenase (quinone) (333 aa).

FMN contacts are provided by residues 56–60 (AGLDK) and T80. K60 is a substrate binding site. Residue 105–109 (NRMGF) participates in substrate binding. The FMN site is built by N133 and N166. N166 contacts substrate. Residue S169 is the Nucleophile of the active site. Residue N171 coordinates substrate. 2 residues coordinate FMN: K211 and T239. Residue 240–241 (NT) participates in substrate binding. Residues G262, G291, and 312 to 313 (YS) contribute to the FMN site.

The protein belongs to the dihydroorotate dehydrogenase family. Type 2 subfamily. In terms of assembly, monomer. It depends on FMN as a cofactor.

The protein localises to the cell membrane. The catalysed reaction is (S)-dihydroorotate + a quinone = orotate + a quinol. Its pathway is pyrimidine metabolism; UMP biosynthesis via de novo pathway; orotate from (S)-dihydroorotate (quinone route): step 1/1. In terms of biological role, catalyzes the conversion of dihydroorotate to orotate with quinone as electron acceptor. The chain is Dihydroorotate dehydrogenase (quinone) from Legionella pneumophila (strain Lens).